Reading from the N-terminus, the 744-residue chain is Leucine-rich repeat extensin-like protein 1 (744 aa).

The signal sequence occupies residues 1-26 (MLFPPLRSLFLFTLLLSSVCFLQIKA). Residues Asn-71 and Asn-77 are each glycosylated (N-linked (GlcNAc...) asparagine). 9 LRR repeats span residues 122–145 (LSDLALFHINSNRFCGEVPLTFNR), 147–170 (KLLYELDLSNNRFVGKFPKVVLSL), 171–194 (PSLKFLDLRYNEFEGKIPSKLFDR), 196–217 (LDAIFLNHNRFRFGIPKNMGNS), 219–240 (VSALVLADNNLGGCIPGSIGQM), 241–265 (GKTLNELILSNDNLTGCLPPQIGNL), 266–289 (KKVTVFDITSNRLQGPLPSSVGNM), 290–313 (KSLEELHVANNAFTGVIPPSICQL), and 315–336 (NLENFTYSSNYFSGRPPICAAS). N-linked (GlcNAc...) asparagine glycosylation is present at Asn-253. N-linked (GlcNAc...) asparagine glycans are attached at residues Asn-318 and Asn-344. One copy of the LRR 10 repeat lies at 381 to 404 (FSPPPPTFKMSPEVRTLPPPIYVY). Residues 382-744 (SPPPPTFKMS…ASPPPPPSYY (363 aa)) form a contains the Ser-Pro(4) repeats region. 4 disordered regions span residues 408–445 (PPPPSSKMSPTVRAYSPPPPPSSKMSPSVRAYSPPPPP), 518–537 (VYSSPPPPPPSPPPPCPESS), 555–576 (PSPVYYPPVTQSPPPPSPVYYP), and 658–744 (PPPS…PSYY). Positions 430–439 (SKMSPSVRAY) are enriched in low complexity. Residues 704-729 (YEPPPEYSYSSSPPPPSPTSYFPPMP) show a composition bias toward pro residues.

Hydroxylated on proline residues in the S-P-P-P-P repeat. In terms of processing, O-glycosylated on hydroxyprolines. As to expression, expressed in root hair cells (at protein level).

The protein resides in the secreted. It is found in the cell wall. Its function is as follows. Modulates cell morphogenesis by regulating cell wall formation and assembly, and/or growth polarization. Together with LRX2, component of the extracellular mechanism regulating root hair morphogenesis and elongation. The chain is Leucine-rich repeat extensin-like protein 1 (LRX1) from Arabidopsis thaliana (Mouse-ear cress).